The primary structure comprises 91 residues: Sec-independent protein translocase protein TatA (91 aa).

The helical transmembrane segment at 1 to 21 (MGSMSVWHWVIVAVVVMLLFG) threads the bilayer. A disordered region spans residues 42–91 (GMADDETQPTNTTSVPPVGPNDPVRTLPHQGAPGTAPQQTHVPAGDHKAV).

The protein belongs to the TatA/E family. In terms of assembly, the Tat system comprises two distinct complexes: a TatABC complex, containing multiple copies of TatA, TatB and TatC subunits, and a separate TatA complex, containing only TatA subunits. Substrates initially bind to the TatABC complex, which probably triggers association of the separate TatA complex to form the active translocon.

It localises to the cell inner membrane. In terms of biological role, part of the twin-arginine translocation (Tat) system that transports large folded proteins containing a characteristic twin-arginine motif in their signal peptide across membranes. TatA could form the protein-conducting channel of the Tat system. The protein is Sec-independent protein translocase protein TatA of Methylorubrum populi (strain ATCC BAA-705 / NCIMB 13946 / BJ001) (Methylobacterium populi).